The chain runs to 459 residues: Spermatogenesis-associated protein 1 (459 aa).

Basic and acidic residues predominate over residues 193 to 205 (LKELPNKNQEEAG). A disordered region spans residues 193-213 (LKELPNKNQEEAGGKATAEKS). Coiled-coil stretches lie at residues 287-374 (TDIS…YKKL) and 400-453 (LIIQ…KKII).

In terms of assembly, interacts with IFT20.

It localises to the cytoplasmic vesicle. Its subcellular location is the secretory vesicle. The protein localises to the acrosome. The chain is Spermatogenesis-associated protein 1 (SPATA1) from Homo sapiens (Human).